The chain runs to 274 residues: tRNA-cytidine(32) 2-sulfurtransferase (274 aa).

Positions 40–45 match the PP-loop motif motif; it reads SGGKDS. [4Fe-4S] cluster contacts are provided by cysteine 115, cysteine 118, and cysteine 206.

It belongs to the TtcA family. In terms of assembly, homodimer. Mg(2+) serves as cofactor. [4Fe-4S] cluster is required as a cofactor.

Its subcellular location is the cytoplasm. It carries out the reaction cytidine(32) in tRNA + S-sulfanyl-L-cysteinyl-[cysteine desulfurase] + AH2 + ATP = 2-thiocytidine(32) in tRNA + L-cysteinyl-[cysteine desulfurase] + A + AMP + diphosphate + H(+). Its pathway is tRNA modification. Catalyzes the ATP-dependent 2-thiolation of cytidine in position 32 of tRNA, to form 2-thiocytidine (s(2)C32). The sulfur atoms are provided by the cysteine/cysteine desulfurase (IscS) system. This chain is tRNA-cytidine(32) 2-sulfurtransferase, found in Pseudomonas putida (strain ATCC 47054 / DSM 6125 / CFBP 8728 / NCIMB 11950 / KT2440).